A 1648-amino-acid chain; its full sequence is Pleiotropic ABC efflux transporter of multiple drugs YBT1 (1648 aa).

The helical transmembrane segment at 28–48 (NYVPTTLVTISILILLHNFFI) threads the bilayer. The N-linked (GlcNAc...) asparagine glycan is linked to asparagine 72. Transmembrane regions (helical) follow at residues 140–160 (VVIE…LSIE), 175–195 (PHVL…LNLN), 207–227 (NIWL…ILPF), and 250–270 (LNLV…LPVL). Asparagine 306 carries an N-linked (GlcNAc...) asparagine glycan. 2 helical membrane passes run 352–372 (FLNL…SIFV) and 392–412 (MNLA…VAIC). The region spanning 361–674 (CFTTISAFSI…ISDMLSYLIQ (314 aa)) is the ABC transmembrane type-1 1 domain. Asparagine 471 carries N-linked (GlcNAc...) asparagine glycosylation. 2 helical membrane passes run 501-521 (ISEL…LTVS) and 523-543 (ILLY…TIII). Residue asparagine 573 is glycosylated (N-linked (GlcNAc...) asparagine). The next 2 membrane-spanning stretches (helical) occupy residues 612–632 (VWCV…GCTF) and 643–662 (LTTP…RDPL). The ABC transporter 1 domain maps to 706-947 (LAFENVTLRW…GLLGEDENMK (242 aa)). Asparagine 710 is a glycosylation site (N-linked (GlcNAc...) asparagine). 741 to 748 (GATGSGKT) is a binding site for ATP. N-linked (GlcNAc...) asparagine glycans are attached at residues asparagine 784 and asparagine 798. Residues 1012 to 1032 (MYGGWYTIVALASVFTAILCL) form a helical membrane-spanning segment. An ABC transmembrane type-1 2 domain is found at 1032 to 1333 (LQITQAWWIR…LVRQYSELEM (302 aa)). A glycan (N-linked (GlcNAc...) asparagine) is linked at asparagine 1042. 3 helical membrane-spanning segments follow: residues 1089–1109 (IAKF…IGSI), 1168–1188 (IQSV…ISYI), and 1191–1211 (AFFP…FFYL). An N-linked (GlcNAc...) asparagine glycan is attached at asparagine 1255. Helical transmembrane passes span 1282–1302 (LIGA…INNI) and 1305–1325 (GLAG…LWLV). Residues 1372–1622 (VEVNNLSLKY…KKSIFYNMCE (251 aa)) enclose the ABC transporter 2 domain. N-linked (GlcNAc...) asparagine glycosylation is present at asparagine 1376. 1406–1413 (GRTGAGKS) is a binding site for ATP. Residues asparagine 1503, asparagine 1524, and asparagine 1573 are each glycosylated (N-linked (GlcNAc...) asparagine).

The protein belongs to the ABC transporter superfamily. ABCC family. Conjugate transporter (TC 3.A.1.208) subfamily.

The protein localises to the membrane. Pleiotropic ABC efflux transporter that might be involved in the resistance to azoles such as fluconazole. The chain is Pleiotropic ABC efflux transporter of multiple drugs YBT1 from Candida glabrata (strain ATCC 2001 / BCRC 20586 / JCM 3761 / NBRC 0622 / NRRL Y-65 / CBS 138) (Yeast).